Consider the following 188-residue polypeptide: MEIKLFGKWDSETVTVKDPSLKSYVSVTPVLVPHTAGRNSKKSFDKSKMNIVERLANKLMANQNNTGKKHETLAIVEEALTIIENRTKENPVQVLVDALENSGPREETTRISYGGIAFLQSVDVSPSRRLDTAFRNIALGASQSAHKNKKTVAQCLADEIIFASKADMQKSFAVRKKEEKERVAQSAR.

The protein belongs to the universal ribosomal protein uS7 family. In terms of assembly, part of the 30S ribosomal subunit.

Functionally, one of the primary rRNA binding proteins, it binds directly to 16S rRNA where it nucleates assembly of the head domain of the 30S subunit. Is located at the subunit interface close to the decoding center. The chain is Small ribosomal subunit protein uS7 from Methanococcus maripaludis (strain C6 / ATCC BAA-1332).